The chain runs to 222 residues: MSHLVKMENGQSQTIQEMLGCIERYNPDHLKTLEAYVQDQAKNNTYDLEANLAVLKLYQFNPHMLNFDITYTILLKCLTNLPHTDFVMAKCLLLPQQMKDENVQTIIDLADILERADFTLFWQRAEVNRNMFRHITGFHDSIRKFVSHVIGTTFQTIRKDLLKELLGGIEDSTLESWVKRNGWKHQGQGLVVVATQDDKIKTKNITEKIEFENVGALMAQCL.

Positions 46–208 constitute a PCI domain; the sequence is YDLEANLAVL…KIKTKNITEK (163 aa).

This sequence belongs to the eIF-3 subunit K family. As to quaternary structure, component of the eukaryotic translation initiation factor 3 (eIF-3) complex. The eIF-3 complex interacts with pix.

It is found in the cytoplasm. In terms of biological role, component of the eukaryotic translation initiation factor 3 (eIF-3) complex, which is involved in protein synthesis of a specialized repertoire of mRNAs and, together with other initiation factors, stimulates binding of mRNA and methionyl-tRNAi to the 40S ribosome. The eIF-3 complex specifically targets and initiates translation of a subset of mRNAs involved in cell proliferation. The chain is Eukaryotic translation initiation factor 3 subunit K from Drosophila ananassae (Fruit fly).